The chain runs to 155 residues: Large ribosomal subunit protein eL19 (155 aa).

The segment covering 66–84 (VRHLQRRKGRRRGMGRRKG) has biased composition (basic residues). A disordered region spans residues 66-85 (VRHLQRRKGRRRGMGRRKGV).

Belongs to the eukaryotic ribosomal protein eL19 family. In terms of assembly, part of the 50S ribosomal subunit.

Binds to the 23S rRNA. This chain is Large ribosomal subunit protein eL19, found in Aeropyrum pernix (strain ATCC 700893 / DSM 11879 / JCM 9820 / NBRC 100138 / K1).